The chain runs to 401 residues: MEQLMSLFPAISTLFTQDPVISITRIALIIFGFFLSYFGFKRTLEPLIMVPMGLGMIAINAGVLFLEAGVVGTIHLDPLVSEPSVLVNLMQVNWLQPVYNFTFSNGLIACIVFFGIGAMSDISFILIRPWASIIVALFAEMGTFATLIIGIKMGLLPNEAAAVATIGGADGPMVLFASLILAKDLFVPIAIIAYLYLSLTYAGYPYLIKLLVPKKYRGLEVEMDFPEVSQRSKFVFSVLACMLLCLLLPVASPLILSFFLGIAIKEAQIEPFQNLLETTLTYGSTLFLGLLLGALCEAKTILDPKISLIVVLGITALLISGIGGVLGGWIVYWFSKGKFNPVIGIAGVSCLPTTAKIAQKTVTEENPYAVILPLAMGAGVCGLIVSAIATGVFISTLFLLN.

10 helical membrane passes run 20 to 40, 46 to 66, 70 to 90, 107 to 127, 131 to 151, 173 to 193, 244 to 264, 275 to 295, 306 to 326, and 380 to 400; these read VISI…YFGF, PLIM…VLFL, VVGT…VNLM, LIAC…FILI, ASII…IIGI, MVLF…AIIA, LCLL…GIAI, LLET…LGAL, ISLI…GGVL, and VCGL…LFLL.

The protein resides in the cell membrane. The catalysed reaction is N(6)-carboxybiotinyl-L-lysyl-[protein] + n Na(+)(in) + H(+) = N(6)-biotinyl-L-lysyl-[protein] + n Na(+)(out) + CO2. Its function is as follows. Beta subunit of the biotin-dependent malonate decarboxylase multienzyme complex (EC 7.2.4.4). Acts as an integral membrane-bound carboxybiotin protein decarboxylase by releasing the carboxyl group of the carboxylated biotin carrier MADF. The free energy of the decarboxylation reaction is used to pump Na(+) out of the cell. The chain is Carboxybiotin decarboxylase (madB) from Malonomonas rubra.